Here is a 621-residue protein sequence, read N- to C-terminus: Chaperone protein HtpG (621 aa).

Residues 1 to 328 (MTQEKKKFDA…SEDLPLNISR (328 aa)) are a; substrate-binding. The segment at 329–544 (ESLQHNNVLE…DTAMDIRMER (216 aa)) is b. Residues 545 to 621 (FLIEQKQIAN…LNDILQKAIL (77 aa)) form a c region.

This sequence belongs to the heat shock protein 90 family. As to quaternary structure, homodimer.

Its subcellular location is the cytoplasm. Molecular chaperone. Has ATPase activity. In Rickettsia prowazekii (strain Madrid E), this protein is Chaperone protein HtpG.